A 324-amino-acid polypeptide reads, in one-letter code: 26S proteasome regulatory subunit rpn8 (324 aa).

An MPN domain is found at 17 to 151; that stretch reads VIVHPLVLLS…TNAYFAIDEI (135 aa).

This sequence belongs to the peptidase M67A family.

Functionally, acts as a regulatory subunit of the 26S proteasome which is involved in the ATP-dependent degradation of ubiquitinated proteins. This Schizosaccharomyces pombe (strain 972 / ATCC 24843) (Fission yeast) protein is 26S proteasome regulatory subunit rpn8 (rpn8).